Reading from the N-terminus, the 1171-residue chain is ATP-dependent helicase/deoxyribonuclease subunit B (1171 aa).

In terms of domain architecture, UvrD-like helicase ATP-binding spans 1–390; that stretch reads MSLRFVIGRA…HPLVECIRSA (390 aa). 8–15 serves as a coordination point for ATP; sequence GRAGSGKS. One can recognise a UvrD-like helicase C-terminal domain in the interval 281-587; the sequence is MEQPRFHSPA…QFANIPPSLD (307 aa). Residues Cys805, Cys1129, Cys1132, and Cys1138 each contribute to the [4Fe-4S] cluster site.

It belongs to the helicase family. AddB/RexB type 1 subfamily. Heterodimer of AddA and AddB. Mg(2+) is required as a cofactor. [4Fe-4S] cluster serves as cofactor.

The heterodimer acts as both an ATP-dependent DNA helicase and an ATP-dependent, dual-direction single-stranded exonuclease. Recognizes the chi site generating a DNA molecule suitable for the initiation of homologous recombination. The AddB subunit has 5' -&gt; 3' nuclease activity but not helicase activity. This Bacillus cereus (strain ATCC 14579 / DSM 31 / CCUG 7414 / JCM 2152 / NBRC 15305 / NCIMB 9373 / NCTC 2599 / NRRL B-3711) protein is ATP-dependent helicase/deoxyribonuclease subunit B.